The chain runs to 140 residues: Mialostatin (140 aa).

Residues 1-18 form the signal peptide; it reads MAFFKSAVFLVCVVLAAA. Cystine bridges form between C90-C103 and C114-C134.

It belongs to the cystatin family. As to expression, expressed in midgut (at protein level).

Its subcellular location is the secreted. In terms of biological role, inhibitor of cysteine proteinases. Inhibits several endogenous midgut digestive cysteine proteases, such as cathepsin L1, L3, B and C, but not aspartic protease cathepsin D1 and cysteine protease legumain. Inhibits proteolysis of blood proteins catalyzed by tick gut cysteine cathepsins. Inhibits host cathepsin B (CSTB), C (CTSC), H (CTSH), K (CTSK), L (CTSL) and S (CTSS). The chain is Mialostatin from Ixodes ricinus (Common tick).